A 169-amino-acid polypeptide reads, in one-letter code: NAD(P)H-quinone oxidoreductase subunit J, chloroplastic (169 aa).

Belongs to the complex I 30 kDa subunit family. In terms of assembly, NDH is composed of at least 16 different subunits, 5 of which are encoded in the nucleus.

It is found in the plastid. Its subcellular location is the chloroplast thylakoid membrane. It carries out the reaction a plastoquinone + NADH + (n+1) H(+)(in) = a plastoquinol + NAD(+) + n H(+)(out). It catalyses the reaction a plastoquinone + NADPH + (n+1) H(+)(in) = a plastoquinol + NADP(+) + n H(+)(out). Its function is as follows. NDH shuttles electrons from NAD(P)H:plastoquinone, via FMN and iron-sulfur (Fe-S) centers, to quinones in the photosynthetic chain and possibly in a chloroplast respiratory chain. The immediate electron acceptor for the enzyme in this species is believed to be plastoquinone. Couples the redox reaction to proton translocation, and thus conserves the redox energy in a proton gradient. This chain is NAD(P)H-quinone oxidoreductase subunit J, chloroplastic, found in Zygnema circumcarinatum (Green alga).